The following is a 154-amino-acid chain: Snaclec lebecin subunit beta (154 aa).

A signal peptide spans 1 to 23 (MGRIIFVSFGLLVVFLSLSGTGA). 3 disulfides stabilise this stretch: C25/C36, C53/C150, and C125/C142. The 120-residue stretch at 32 to 151 (DEEHCYYVFF…CGDDYPFVCK (120 aa)) folds into the C-type lectin domain. An N-linked (GlcNAc...) asparagine glycan is attached at N139.

In terms of assembly, heterodimer with the alpha subunit (AC W5XDM0); disulfide-linked. Expressed by the venom gland.

It is found in the secreted. Inhibits human breast cancer cells (MDA-MB231) migration and proliferation, as well as their adhesion to fibrinogen and fibronectin. This inhibition may be due to the binding to receptors of the integrin family, probably alpha-v/beta-3 (ITGAV/ITGB3) (40% inhibition of cell adhesion) and alpha-5/beta-1 (ITGA5/ITGB1) (by comparison with lebectin). In Macrovipera lebetinus (Levantine viper), this protein is Snaclec lebecin subunit beta.